Reading from the N-terminus, the 160-residue chain is MTKKKAYKPGSATIAQNKRARHEYFIEEEFEAGLALQGWEVKSLRAGKANISDSYVMFKNGEAFLFGATITPLNVASTHVVCEPMRTRKLLLNKRELDSLFGRVNREGYTVVALSMYWKNAWVKVKIGVAKGKKDNDKRDDIRDREWKLDKARIMKHANR.

This sequence belongs to the SmpB family.

It localises to the cytoplasm. Functionally, required for rescue of stalled ribosomes mediated by trans-translation. Binds to transfer-messenger RNA (tmRNA), required for stable association of tmRNA with ribosomes. tmRNA and SmpB together mimic tRNA shape, replacing the anticodon stem-loop with SmpB. tmRNA is encoded by the ssrA gene; the 2 termini fold to resemble tRNA(Ala) and it encodes a 'tag peptide', a short internal open reading frame. During trans-translation Ala-aminoacylated tmRNA acts like a tRNA, entering the A-site of stalled ribosomes, displacing the stalled mRNA. The ribosome then switches to translate the ORF on the tmRNA; the nascent peptide is terminated with the 'tag peptide' encoded by the tmRNA and targeted for degradation. The ribosome is freed to recommence translation, which seems to be the essential function of trans-translation. This Yersinia pseudotuberculosis serotype O:1b (strain IP 31758) protein is SsrA-binding protein.